The following is an 874-amino-acid chain: Alanine--tRNA ligase (874 aa).

4 residues coordinate Zn(2+): histidine 562, histidine 566, cysteine 665, and histidine 669.

It belongs to the class-II aminoacyl-tRNA synthetase family. It depends on Zn(2+) as a cofactor.

It is found in the cytoplasm. It carries out the reaction tRNA(Ala) + L-alanine + ATP = L-alanyl-tRNA(Ala) + AMP + diphosphate. Functionally, catalyzes the attachment of alanine to tRNA(Ala) in a two-step reaction: alanine is first activated by ATP to form Ala-AMP and then transferred to the acceptor end of tRNA(Ala). Also edits incorrectly charged Ser-tRNA(Ala) and Gly-tRNA(Ala) via its editing domain. The protein is Alanine--tRNA ligase of Stutzerimonas stutzeri (strain A1501) (Pseudomonas stutzeri).